A 943-amino-acid chain; its full sequence is MVKSYQRFEQAAAFGVIASNANCVWIPASSGNSNGSGPGQLITSALEDVNIWDIKTGDLVSKLSDGLPPGASDARGAKPAECTYLEAHKDTDLLAVGYADGVIKVWDLMSKTVLLNFNGHKAAITLLQFDGTGTRLISGSKDSNIIVWDLVGEVGLYKLRSHKDSITGFWCQGEDWLISTSKDGMIKLWDLKTHQCIETHIAHTGECWGLAVKDDLLITTGTDSQVKIWKLDIENDKMGGKLTEMGIFEKQSKQRGLKIEFITNSSDKTSFFYIQNADKTIETFRIRKEEEIARGLKKREKRLKEKGLTEEEIAKSIKESYSSFILHPFQTIRSLYKIKSASWTTVSSSKLELVLTTSSNTIEYYSIPYEKRDPTSPAPLKTHTIELQGQRTDVRSIDISDDNKLLATASNGSLKIWNIKTHKCIRTFECGYALTCKFLPGGLLVILGTRNGELQLFDLASSSLLDTIEDAHDAAIWSLDLTSDGKRLVTGSADKTVKFWDFKVENSLVPGTKNKFLPVLKLHHDTTLELTDDILCVRVSPDDRYLAISLLDNTVKVFFLDSMKFYLSLYGHKLPVLSIDISFDSKMIITSSADKNIKIWGLDFGDCHKSLFAHQDSIMNVKFLPQSHNFFSCSKDAVVKYWDGEKFECIQKLYAHQSEVWALAVATDGGFVVSSSHDHSIRIWEETEDQVFLEEEKEKELEEQYEDTLLTSLEEGNGDDAFKADASGEGVEDEASGVHKQTLESLKAGERLMEALDLGIAEIEGLEAYNRDMKLWQRKKLGEAPIKPQGNAVLIAVNKTPEQYIMDTLLRIRMSQLEDALMVMPFSYVLKFLKFIDTVMQNKTLLHSHLPLICKNLFFIIKFNHKELVSQKNEELKLQINRVKTELRSALKSTEDDLGFNVQGLKFVKQQWNLRHNYEFVDEYDQQEKESNSARKRVFGTVI.

WD repeat units follow at residues 77-107 (AKPAECTYLEAHKDTDLLAVGYADGVIKVWD), 119-149 (GHKAAITLLQFDGTGTRLISGSKDSNIIVWD), 161-190 (SHKDSITGFWCQGEDWLISTSKDGMIKLWD), 202-230 (AHTGECWGLAVKDDLLITTGTDSQVKIWK), 389-418 (GQRTDVRSIDISDDNKLLATASNGSLKIWN), 428-458 (FECGYALTCKFLPGGLLVILGTRNGELQLFD), 471-501 (AHDAAIWSLDLTSDGKRLVTGSADKTVKFWD), 571-601 (GHKLPVLSIDISFDSKMIITSSADKNIKIWG), 613-643 (AHQDSIMNVKFLPQSHNFFSCSKDAVVKYWD), and 655-685 (AHQSEVWALAVATDGGFVVSSSHDHSIRIWE). The segment at 715-739 (EGNGDDAFKADASGEGVEDEASGVH) is disordered.

Belongs to the WD repeat WDR3/UTP12 family. As to quaternary structure, interacts with snoRNA U3. Interacts with MPP10. Component of the ribosomal small subunit (SSU) processome composed of at least 40 protein subunits and snoRNA U3.

It is found in the nucleus. The protein localises to the nucleolus. Functionally, involved in nucleolar processing of pre-18S ribosomal RNA. The chain is U3 small nucleolar RNA-associated protein 12 (DIP2) from Saccharomyces cerevisiae (strain ATCC 204508 / S288c) (Baker's yeast).